Here is a 353-residue protein sequence, read N- to C-terminus: RNA replication protein (353 aa).

In terms of domain architecture, RdRp catalytic spans 137–244 (GVCTESDYEA…NRALFIKDTH (108 aa)).

The protein belongs to the potexviruses/carlaviruses RNA replication protein family.

It catalyses the reaction RNA(n) + a ribonucleoside 5'-triphosphate = RNA(n+1) + diphosphate. The enzyme catalyses ATP + H2O = ADP + phosphate + H(+). RNA replication. The central part of this protein possibly functions as an ATP-binding helicase. This chain is RNA replication protein, found in Potato virus S (strain Peruvian).